Reading from the N-terminus, the 37-residue chain is Large ribosomal subunit protein bL36c (37 aa).

Belongs to the bacterial ribosomal protein bL36 family.

Its subcellular location is the plastid. The protein localises to the chloroplast. This Lactuca sativa (Garden lettuce) protein is Large ribosomal subunit protein bL36c.